The primary structure comprises 562 residues: Glutamyl-tRNA(Gln) amidotransferase subunit B, chloroplastic/mitochondrial (562 aa).

The segment at 48–76 (SVASNSKREPRPVKTRVMTQERGSGETQT) is disordered. The span at 64–76 (VMTQERGSGETQT) shows a compositional bias: polar residues.

Belongs to the GatB/GatE family. GatB subfamily. In terms of assembly, subunit of the heterotrimeric GatCAB amidotransferase (AdT) complex, composed of A, B and C subunits.

It localises to the mitochondrion. The protein resides in the plastid. Its subcellular location is the chloroplast. The catalysed reaction is L-glutamyl-tRNA(Gln) + L-glutamine + ATP + H2O = L-glutaminyl-tRNA(Gln) + L-glutamate + ADP + phosphate + H(+). Its function is as follows. Allows the formation of correctly charged Gln-tRNA(Gln) through the transamidation of misacylated Glu-tRNA(Gln) in chloroplasts and mitochondria. The reaction takes place in the presence of glutamine and ATP through an activated gamma-phospho-Glu-tRNA(Gln). This is Glutamyl-tRNA(Gln) amidotransferase subunit B, chloroplastic/mitochondrial from Physcomitrium patens (Spreading-leaved earth moss).